Here is a 196-residue protein sequence, read N- to C-terminus: uncharacterized protein (196 aa).

It to E.coli YjaG.

This is an uncharacterized protein from Haemophilus influenzae (strain ATCC 51907 / DSM 11121 / KW20 / Rd).